A 67-amino-acid polypeptide reads, in one-letter code: Guanine nucleotide-binding protein G(I)/G(S)/G(O) subunit gamma-13 (67 aa).

Cysteine methyl ester is present on Cys-64. Cys-64 carries S-farnesyl cysteine lipidation. The propeptide at 65-67 (TIL) is removed in mature form.

This sequence belongs to the G protein gamma family. In terms of assembly, g proteins are composed of 3 units, alpha, beta and gamma.

It is found in the cell membrane. Its function is as follows. Guanine nucleotide-binding proteins (G proteins) are involved as a modulator or transducer in various transmembrane signaling systems. The beta and gamma chains are required for the GTPase activity, for replacement of GDP by GTP, and for G protein-effector interaction. The sequence is that of Guanine nucleotide-binding protein G(I)/G(S)/G(O) subunit gamma-13 (Gng13) from Mus musculus (Mouse).